The sequence spans 498 residues: Putative ABC transporter ATP-binding protein MM_2387 (498 aa).

ABC transporter domains follow at residues 2–242 (IELR…TSKS) and 258–490 (ISIK…VEEK). ATP-binding positions include 36-43 (GHSAAGKT) and 290-297 (GENGSGKT).

Belongs to the ABC transporter superfamily.

The protein localises to the cell membrane. In terms of biological role, probably part of an ABC transporter complex. Responsible for energy coupling to the transport system. The sequence is that of Putative ABC transporter ATP-binding protein MM_2387 from Methanosarcina mazei (strain ATCC BAA-159 / DSM 3647 / Goe1 / Go1 / JCM 11833 / OCM 88) (Methanosarcina frisia).